The primary structure comprises 110 residues: Large ribosomal subunit protein uL22 (110 aa).

The protein belongs to the universal ribosomal protein uL22 family. As to quaternary structure, part of the 50S ribosomal subunit.

Functionally, this protein binds specifically to 23S rRNA; its binding is stimulated by other ribosomal proteins, e.g. L4, L17, and L20. It is important during the early stages of 50S assembly. It makes multiple contacts with different domains of the 23S rRNA in the assembled 50S subunit and ribosome. In terms of biological role, the globular domain of the protein is located near the polypeptide exit tunnel on the outside of the subunit, while an extended beta-hairpin is found that lines the wall of the exit tunnel in the center of the 70S ribosome. The chain is Large ribosomal subunit protein uL22 from Pasteurella multocida (strain Pm70).